Consider the following 369-residue polypeptide: Methylthioribose-1-phosphate isomerase (369 aa).

Residues 54–56, R95, and Q208 contribute to the substrate site; that span reads RGA. The Proton donor role is filled by D249. 259 to 260 provides a ligand contact to substrate; sequence NK.

The protein belongs to the eIF-2B alpha/beta/delta subunits family. MtnA subfamily.

It carries out the reaction 5-(methylsulfanyl)-alpha-D-ribose 1-phosphate = 5-(methylsulfanyl)-D-ribulose 1-phosphate. The protein operates within amino-acid biosynthesis; L-methionine biosynthesis via salvage pathway; L-methionine from S-methyl-5-thio-alpha-D-ribose 1-phosphate: step 1/6. Its function is as follows. Catalyzes the interconversion of methylthioribose-1-phosphate (MTR-1-P) into methylthioribulose-1-phosphate (MTRu-1-P). This Desulfatibacillum aliphaticivorans protein is Methylthioribose-1-phosphate isomerase.